Consider the following 792-residue polypeptide: MARTHILGFPRIGERRELKFAQEAFWRGDRTEAELRDVAAQLRRRHWQLQADRGLDTVATGDFAYYDQMLSLTALLGALPRRFGLDPARLTLTQYFELARGNREQPAMEMTKWFDTNYHYLVPELDAETTFDGGPAWFFEEADEALALGLRARPVLIGPVTYLWLSKSHVAGFDRLALLPQLLQGYRRILDQLKARGIEWVQIDEPALCLDLEPAWLDAFDTAYAALREAGPKLLLATYFDTAADHAQRAAALPVDGFHIDLVRAPEQLAAWQAALPAHAVLSLGVIDGRNIWRTDLRRVLDTLRPVQAALGERLWLAPSCSLLHVPVSLAHEVRLDVELKSWLAFATEKLDELSVLGRALNQSDAVVAEALAASDAAQASRRASRRVVKPRVQQRLAAVSAGMADRASPFAERIERQRQALQLPLLPTTTIGSFPQTAAIRQTRAAFKRGEIGALEYLERIRAEIAVAVRKQEALGLDVLVHGEAERNDMVEYFGEQLCGYGFTENGWVQSYGSRCVKPPVIYGDVYRPEPMTVDTARYAQSLTERPMKGMLTGPITMLQWSFVRDDQPRATTARQLALAIRDEVCDLEQAGIRVIQIDEPALREGLPLRRADWDAYLDWAVTAFRLSASGVQDQTQIHTHMCYAEFNDILPAIAAMDADVITIETSRSAMELLEGFGDFDYPNEIGPGVYDIHSPRVPSVQAMERLLDRACEVVPPQRLWVNPDCGLKTRGWEETEAALANMVSAARALRARLSARGATTWKRLSKPAAATAAAVPHAGNACTACATHAN.

5-methyltetrahydropteroyltri-L-glutamate-binding positions include 16–19 (RELK) and lysine 112. L-homocysteine-binding positions include 432-434 (IGS) and glutamate 485. L-methionine is bound by residues 432 to 434 (IGS) and glutamate 485. Residues 516 to 517 (RC) and tryptophan 562 contribute to the 5-methyltetrahydropteroyltri-L-glutamate site. Aspartate 600 is a binding site for L-homocysteine. Residue aspartate 600 coordinates L-methionine. Glutamate 606 is a binding site for 5-methyltetrahydropteroyltri-L-glutamate. Zn(2+)-binding residues include histidine 642, cysteine 644, and glutamate 666. The active-site Proton donor is the histidine 695. Cysteine 727 contributes to the Zn(2+) binding site.

This sequence belongs to the vitamin-B12 independent methionine synthase family. Requires Zn(2+) as cofactor.

It carries out the reaction 5-methyltetrahydropteroyltri-L-glutamate + L-homocysteine = tetrahydropteroyltri-L-glutamate + L-methionine. It participates in amino-acid biosynthesis; L-methionine biosynthesis via de novo pathway; L-methionine from L-homocysteine (MetE route): step 1/1. Functionally, catalyzes the transfer of a methyl group from 5-methyltetrahydrofolate to homocysteine resulting in methionine formation. This chain is 5-methyltetrahydropteroyltriglutamate--homocysteine methyltransferase, found in Cupriavidus necator (Alcaligenes eutrophus).